Here is a 156-residue protein sequence, read N- to C-terminus: Small ribosomal subunit protein uS7 (156 aa).

The protein belongs to the universal ribosomal protein uS7 family. In terms of assembly, part of the 30S ribosomal subunit. Contacts proteins S9 and S11.

In terms of biological role, one of the primary rRNA binding proteins, it binds directly to 16S rRNA where it nucleates assembly of the head domain of the 30S subunit. Is located at the subunit interface close to the decoding center, probably blocks exit of the E-site tRNA. This chain is Small ribosomal subunit protein uS7, found in Kocuria rhizophila (strain ATCC 9341 / DSM 348 / NBRC 103217 / DC2201).